A 905-amino-acid chain; its full sequence is Stonin-2 (905 aa).

Disordered stretches follow at residues 1-121 (MTTL…HQET), 178-205 (EQTS…VEME), and 244-263 (LPPV…SVIP). A compositionally biased stretch (low complexity) spans 40–50 (SSSPDQSESSS). Over residues 60 to 73 (SQDHSHSEQDDSSE) the composition is skewed to basic and acidic residues. A compositionally biased stretch (pro residues) spans 85–94 (PGSPEQPPPD). Positions 178-196 (EQTSGQASGADSTDNSSSL) are enriched in polar residues. The span at 244-256 (LPPVTSPLKPNTP) shows a compositional bias: pro residues. Position 255 is a phosphothreonine (Thr-255). Residues Ser-281, Ser-287, and Ser-302 each carry the phosphoserine modification. Short sequence motifs (NPF) lie at residues 313 to 315 (NPF) and 329 to 331 (NPF). In terms of domain architecture, SHD spans 427-560 (GWPMMLRIPE…DLPVLSMDLS (134 aa)). The MHD domain occupies 568 to 878 (EEEITVDVRD…SYQVALGSIW (311 aa)). The residue at position 762 (Ser-762) is a Phosphoserine.

The protein belongs to the Stoned B family. As to quaternary structure, interacts with the second C2 domain of synaptotagmins SYT1 and SYT2. Interacts with EPS15, EPS15R and ITSN1. Interacts indirectly with the AP-2 adapter complex. Interacts with TOR1A and COPS4; the interaction controls STON2 protein stability. Post-translationally, phosphorylated in vitro by PKD. In terms of processing, neddylated; deneddylated via its interaction with the COP9 signalosome (CSN) complex through TOR1A and COPS4. Ubiquitinated; leading to its degradation. In terms of tissue distribution, ubiquitous.

The protein localises to the cytoplasm. The protein resides in the membrane. It localises to the synapse. Its subcellular location is the synaptosome. Functionally, adapter protein involved in endocytic machinery. Involved in the synaptic vesicle recycling. May facilitate clathrin-coated vesicle uncoating. The chain is Stonin-2 (STON2) from Homo sapiens (Human).